A 455-amino-acid polypeptide reads, in one-letter code: Bifunctional protein GlmU (455 aa).

The interval 1 to 229 (MLNSAMSVVI…ISETEGVNNR (229 aa)) is pyrophosphorylase. UDP-N-acetyl-alpha-D-glucosamine contacts are provided by residues 11–14 (LAAG), Lys-25, Gln-76, 81–82 (GT), 103–105 (YGD), Gly-140, Glu-154, Asn-169, and Asn-227. Asp-105 contributes to the Mg(2+) binding site. Residue Asn-227 participates in Mg(2+) binding. The segment at 230–250 (LQLSRLERIYQAEQAEKLLLA) is linker. The N-acetyltransferase stretch occupies residues 251–455 (GVMLRDPARF…KQGWQRPVKK (205 aa)). Positions 333 and 351 each coordinate UDP-N-acetyl-alpha-D-glucosamine. Catalysis depends on His-363, which acts as the Proton acceptor. 2 residues coordinate UDP-N-acetyl-alpha-D-glucosamine: Tyr-366 and Asn-377. Acetyl-CoA-binding positions include Ala-380, 386–387 (NY), Ser-405, Ala-423, and Arg-440.

This sequence in the N-terminal section; belongs to the N-acetylglucosamine-1-phosphate uridyltransferase family. The protein in the C-terminal section; belongs to the transferase hexapeptide repeat family. As to quaternary structure, homotrimer. Mg(2+) is required as a cofactor.

It is found in the cytoplasm. The enzyme catalyses alpha-D-glucosamine 1-phosphate + acetyl-CoA = N-acetyl-alpha-D-glucosamine 1-phosphate + CoA + H(+). It catalyses the reaction N-acetyl-alpha-D-glucosamine 1-phosphate + UTP + H(+) = UDP-N-acetyl-alpha-D-glucosamine + diphosphate. The protein operates within nucleotide-sugar biosynthesis; UDP-N-acetyl-alpha-D-glucosamine biosynthesis; N-acetyl-alpha-D-glucosamine 1-phosphate from alpha-D-glucosamine 6-phosphate (route II): step 2/2. Its pathway is nucleotide-sugar biosynthesis; UDP-N-acetyl-alpha-D-glucosamine biosynthesis; UDP-N-acetyl-alpha-D-glucosamine from N-acetyl-alpha-D-glucosamine 1-phosphate: step 1/1. It participates in bacterial outer membrane biogenesis; LPS lipid A biosynthesis. Catalyzes the last two sequential reactions in the de novo biosynthetic pathway for UDP-N-acetylglucosamine (UDP-GlcNAc). The C-terminal domain catalyzes the transfer of acetyl group from acetyl coenzyme A to glucosamine-1-phosphate (GlcN-1-P) to produce N-acetylglucosamine-1-phosphate (GlcNAc-1-P), which is converted into UDP-GlcNAc by the transfer of uridine 5-monophosphate (from uridine 5-triphosphate), a reaction catalyzed by the N-terminal domain. The sequence is that of Bifunctional protein GlmU from Salmonella arizonae (strain ATCC BAA-731 / CDC346-86 / RSK2980).